A 337-amino-acid chain; its full sequence is Glyceraldehyde-3-phosphate dehydrogenase (337 aa).

NAD(+) contacts are provided by residues 11-12 (TI) and Gly110. 139-141 (SCN) serves as a coordination point for D-glyceraldehyde 3-phosphate. The active-site Nucleophile is Cys140. Position 168 (Arg168) interacts with NAD(+). D-glyceraldehyde 3-phosphate is bound at residue 194-195 (HG). Gln301 serves as a coordination point for NAD(+).

This sequence belongs to the glyceraldehyde-3-phosphate dehydrogenase family. As to quaternary structure, homotetramer.

It localises to the cytoplasm. The enzyme catalyses D-glyceraldehyde 3-phosphate + phosphate + NADP(+) = (2R)-3-phospho-glyceroyl phosphate + NADPH + H(+). It carries out the reaction D-glyceraldehyde 3-phosphate + phosphate + NAD(+) = (2R)-3-phospho-glyceroyl phosphate + NADH + H(+). Its pathway is carbohydrate degradation; glycolysis; pyruvate from D-glyceraldehyde 3-phosphate: step 1/5. The protein is Glyceraldehyde-3-phosphate dehydrogenase (gap) of Methanothermobacter thermautotrophicus (strain ATCC 29096 / DSM 1053 / JCM 10044 / NBRC 100330 / Delta H) (Methanobacterium thermoautotrophicum).